Consider the following 70-residue polypeptide: Large ribosomal subunit protein bL31 (70 aa).

Zn(2+)-binding residues include cysteine 16, cysteine 18, cysteine 38, and cysteine 41.

It belongs to the bacterial ribosomal protein bL31 family. Type A subfamily. In terms of assembly, part of the 50S ribosomal subunit. It depends on Zn(2+) as a cofactor.

In terms of biological role, binds the 23S rRNA. The polypeptide is Large ribosomal subunit protein bL31 (Bifidobacterium adolescentis (strain ATCC 15703 / DSM 20083 / NCTC 11814 / E194a)).